The sequence spans 108 residues: Small ribosomal subunit protein uS10 (108 aa).

This sequence belongs to the universal ribosomal protein uS10 family. In terms of assembly, part of the 30S ribosomal subunit.

Its function is as follows. Involved in the binding of tRNA to the ribosomes. This is Small ribosomal subunit protein uS10 from Mycoplasma pneumoniae (strain ATCC 29342 / M129 / Subtype 1) (Mycoplasmoides pneumoniae).